Here is a 617-residue protein sequence, read N- to C-terminus: Proline--tRNA ligase (617 aa).

The protein belongs to the class-II aminoacyl-tRNA synthetase family. ProS type 1 subfamily. As to quaternary structure, homodimer.

The protein localises to the cytoplasm. It carries out the reaction tRNA(Pro) + L-proline + ATP = L-prolyl-tRNA(Pro) + AMP + diphosphate. Its function is as follows. Catalyzes the attachment of proline to tRNA(Pro) in a two-step reaction: proline is first activated by ATP to form Pro-AMP and then transferred to the acceptor end of tRNA(Pro). As ProRS can inadvertently accommodate and process non-cognate amino acids such as alanine and cysteine, to avoid such errors it has two additional distinct editing activities against alanine. One activity is designated as 'pretransfer' editing and involves the tRNA(Pro)-independent hydrolysis of activated Ala-AMP. The other activity is designated 'posttransfer' editing and involves deacylation of mischarged Ala-tRNA(Pro). The misacylated Cys-tRNA(Pro) is not edited by ProRS. The sequence is that of Proline--tRNA ligase from Streptococcus pneumoniae (strain P1031).